Reading from the N-terminus, the 458-residue chain is MSFLDRVKIYVKAGKGGDGCLSFRREKFIEFGGPNGGNGGKGGDVYIKTERNLTTLLELAYNPHIEAKNGEKGGTYNKTGVGADDLTIYVPCGTIVKKDGEIIADLTEEGQSVLVAKGGRGGRGNQSFKTHSNTAPRISEIGQPGEEITLYLELKVLADLGLVGFPNAGKSTFLSRVSAARPKIADYPFTTLNPNLGIAMHKKVSFVIADIPGIIEGASEGKGLGHQFLKHIERTRVLLHLVDPMGFKDIDAVESVKVIEKELKTFDRELAKKPRIIALNKADLPEAKEVYNKIVKKYKKHKVFLISAATGEGVDKVLNEIVKVISATPVPNVAISKSTVAVHGVEPLFKIVPLEDGRVQVFGRKIEDMVNMTHFNQLQGVERLRNIFKKIGLEKALIKKGVMPGDIIVVGQKEFEWSGTELDSERAEQPDFEGYKRRTTQAERLEKRRQRRLKKEEK.

The region spanning 1–157 (MSFLDRVKIY…ITLYLELKVL (157 aa)) is the Obg domain. The region spanning 158–326 (ADLGLVGFPN…VLNEIVKVIS (169 aa)) is the OBG-type G domain. GTP is bound by residues 164-171 (GFPNAGKS), 189-193 (FTTLN), 210-213 (DIPG), 280-283 (NKAD), and 307-309 (SAA). Residues S171 and T191 each contribute to the Mg(2+) site. An OCT domain is found at 341–419 (AVHGVEPLFK…VGQKEFEWSG (79 aa)). The segment at 420 to 458 (TELDSERAEQPDFEGYKRRTTQAERLEKRRQRRLKKEEK) is disordered. The span at 423-446 (DSERAEQPDFEGYKRRTTQAERLE) shows a compositional bias: basic and acidic residues. Basic residues predominate over residues 447-458 (KRRQRRLKKEEK).

It belongs to the TRAFAC class OBG-HflX-like GTPase superfamily. OBG GTPase family. As to quaternary structure, monomer. Mg(2+) is required as a cofactor.

Its subcellular location is the cytoplasm. Its function is as follows. An essential GTPase which binds GTP, GDP and possibly (p)ppGpp with moderate affinity, with high nucleotide exchange rates and a fairly low GTP hydrolysis rate. Plays a role in control of the cell cycle, stress response, ribosome biogenesis and in those bacteria that undergo differentiation, in morphogenesis control. This is GTPase Obg from Elusimicrobium minutum (strain Pei191).